The following is a 340-amino-acid chain: Methionine import ATP-binding protein MetN 2 (340 aa).

The region spanning 5-244 (VRFESVTKTF…PQAPASKSFV (240 aa)) is the ABC transporter domain. Residue 41 to 48 (GYSGAGKS) participates in ATP binding.

It belongs to the ABC transporter superfamily. Methionine importer (TC 3.A.1.24) family. In terms of assembly, the complex is composed of two ATP-binding proteins (MetN), two transmembrane proteins (MetI) and a solute-binding protein (MetQ).

It is found in the cell membrane. The catalysed reaction is L-methionine(out) + ATP + H2O = L-methionine(in) + ADP + phosphate + H(+). It carries out the reaction D-methionine(out) + ATP + H2O = D-methionine(in) + ADP + phosphate + H(+). Its function is as follows. Part of the ABC transporter complex MetNIQ involved in methionine import. Responsible for energy coupling to the transport system. The polypeptide is Methionine import ATP-binding protein MetN 2 (Rhodococcus jostii (strain RHA1)).